We begin with the raw amino-acid sequence, 47 residues long: Large ribosomal subunit protein bL34 (47 aa).

It belongs to the bacterial ribosomal protein bL34 family.

The chain is Large ribosomal subunit protein bL34 from Nocardia farcinica (strain IFM 10152).